The sequence spans 394 residues: WAT1-related protein At2g40900 (394 aa).

A run of 10 helical transmembrane segments spans residues 13–33 (FAMVCLQFGYAGMNLVTKTVL), 40–60 (YVLVAYRNAFATAAIAPFALL), 67–87 (SKMTFPIFMRIFLLALLGPVI), 102–122 (TFSSAVSNIVPAITIILATLF), 142–162 (LVTVVGSILMIFYKGPFINFF), 180–200 (AAVFLLLASLSWASFFVLQAA), 209–229 (LSMSTMVCFMGTLQSLALAFV), 245–265 (LLASAYAGIMSSSIAYYVQGL), 273–293 (VFVTAFNPLIVVIVSIMSFFV), and 298–318 (IYLGGVIGVVVLMVGVYAVLW). EamA domains are found at residues 22 to 147 (YAGM…TVVG) and 189 to 317 (LSWA…YAVL).

The protein belongs to the drug/metabolite transporter (DMT) superfamily. Plant drug/metabolite exporter (P-DME) (TC 2.A.7.4) family.

Its subcellular location is the membrane. This is WAT1-related protein At2g40900 from Arabidopsis thaliana (Mouse-ear cress).